The following is a 332-amino-acid chain: Succinylglutamate desuccinylase (332 aa).

His-59, Glu-62, and His-151 together coordinate Zn(2+). Glu-215 is an active-site residue.

The protein belongs to the AspA/AstE family. Succinylglutamate desuccinylase subfamily. The cofactor is Zn(2+).

The catalysed reaction is N-succinyl-L-glutamate + H2O = L-glutamate + succinate. It functions in the pathway amino-acid degradation; L-arginine degradation via AST pathway; L-glutamate and succinate from L-arginine: step 5/5. In terms of biological role, transforms N(2)-succinylglutamate into succinate and glutamate. This is Succinylglutamate desuccinylase from Pseudomonas paraeruginosa (strain DSM 24068 / PA7) (Pseudomonas aeruginosa (strain PA7)).